The sequence spans 381 residues: Putative MgpC-like protein MPN_503 (381 aa).

Residues 1–109 form a disordered region; sequence MNGVAQDKVH…TDSQQSGHNS (109 aa). Residues 13–31 show a composition bias toward polar residues; that stretch reads EQTTQWNQQASQKNLTNNP. 2 stretches are compositionally biased toward basic and acidic residues: residues 40–51 and 61–73; these read KLDKGRAYRKLN and DSTK…DKDG. Residues 89 to 109 show a composition bias toward polar residues; sequence VSSTESQMAAVTDSQQSGHNS.

It belongs to the MgpC family.

The sequence is that of Putative MgpC-like protein MPN_503 from Mycoplasma pneumoniae (strain ATCC 29342 / M129 / Subtype 1) (Mycoplasmoides pneumoniae).